The sequence spans 258 residues: Ubiquinone/menaquinone biosynthesis C-methyltransferase UbiE (258 aa).

Residues 1–21 (MSESRTSADGGMETSYGFREV) are disordered. S-adenosyl-L-methionine-binding positions include Thr81, Asp102, and 130–131 (NA).

This sequence belongs to the class I-like SAM-binding methyltransferase superfamily. MenG/UbiE family.

It carries out the reaction a 2-demethylmenaquinol + S-adenosyl-L-methionine = a menaquinol + S-adenosyl-L-homocysteine + H(+). The enzyme catalyses a 2-methoxy-6-(all-trans-polyprenyl)benzene-1,4-diol + S-adenosyl-L-methionine = a 5-methoxy-2-methyl-3-(all-trans-polyprenyl)benzene-1,4-diol + S-adenosyl-L-homocysteine + H(+). Its pathway is quinol/quinone metabolism; menaquinone biosynthesis; menaquinol from 1,4-dihydroxy-2-naphthoate: step 2/2. It participates in cofactor biosynthesis; ubiquinone biosynthesis. Functionally, methyltransferase required for the conversion of demethylmenaquinol (DMKH2) to menaquinol (MKH2) and the conversion of 2-polyprenyl-6-methoxy-1,4-benzoquinol (DDMQH2) to 2-polyprenyl-3-methyl-6-methoxy-1,4-benzoquinol (DMQH2). The protein is Ubiquinone/menaquinone biosynthesis C-methyltransferase UbiE of Rhizobium johnstonii (strain DSM 114642 / LMG 32736 / 3841) (Rhizobium leguminosarum bv. viciae).